The chain runs to 251 residues: Chlorocatechol 1,2-dioxygenase (251 aa).

Residues Tyr130, Tyr164, His188, and His190 each contribute to the Fe cation site.

Belongs to the intradiol ring-cleavage dioxygenase family. Fe(3+) serves as cofactor.

It carries out the reaction 3-chlorocatechol + O2 = (2E,4Z)-2-chloromuconate + 2 H(+). The enzyme catalyses 3,4-dichlorocatechol + O2 = (2Z,4Z)-2,3-dichloromuconate + 2 H(+). The catalysed reaction is 3,5-dichlorocatechol + O2 = (2E,4E)-2,4-dichloromuconate + 2 H(+). It catalyses the reaction 3,6-dichlorocatechol + O2 = (2E,4E)-2,5-dichloromuconate + H(+). It carries out the reaction 3,4,6-trichlorocatechol + O2 = (2Z,4E)-2,3,5-trichloromuconate + H(+). It participates in xenobiotic degradation. Chlorocatechol 1,2-dioxygenase involved in the degradation of chlorinated benzenes, that occurs via chlorocatechol intermediates. Displays broad substrate specificity. Preferentially cleaves 3-chlorocatechol and 3,4-dichlorocatechol, and shows lower activity on 3,5-dichlorocatechol, 3,6-dichlorocatechol and 3,4,6-trichlorocatechol in vitro. Is not able to convert 3,4,5-trichlorocatechol and 3,4,5,6-tetrachlorocatechol. Thus, probably functions in the degradation pathways of 1,2-dichlorobenzene, 1,4-dichlorobenzene and 1,2,4-trichlorobenzene (via 3,4-dichlorocatechol, 3,6-dichlorocatechol and 3,4,6-trichlorocatechol intermediates, respectively), which allow Pseudomonas sp. strain P51 to grow on these substrates as the sole carbon and energy source. In Pseudomonas sp. (strain P51), this protein is Chlorocatechol 1,2-dioxygenase.